A 278-amino-acid polypeptide reads, in one-letter code: DNA adenine methylase (278 aa).

Residues W10, K14, D54, and D181 each contribute to the S-adenosyl-L-methionine site.

Belongs to the N(4)/N(6)-methyltransferase family.

The catalysed reaction is a 2'-deoxyadenosine in DNA + S-adenosyl-L-methionine = an N(6)-methyl-2'-deoxyadenosine in DNA + S-adenosyl-L-homocysteine + H(+). An alpha subtype methylase, recognizes the double-stranded sequence 5'-GATC-3' and methylates A-2. May be involved in methyl-directed DNA mismatch repair, initiation of chromosome replication and gene expression. The chain is DNA adenine methylase (dam) from Salmonella typhimurium.